The primary structure comprises 369 residues: Chaperone protein DnaJ (369 aa).

Positions 7–73 (DYYEILGVPR…QKRAMYDRFG (67 aa)) constitute a J domain. The CR-type zinc finger occupies 143–225 (GAEIPVEYER…CGGSGRVLRK (83 aa)). The Zn(2+) site is built by Cys156, Cys159, Cys173, Cys176, Cys199, Cys202, Cys213, and Cys216. 4 CXXCXGXG motif repeats span residues 156-163 (CPRCGGTG), 173-180 (CPSCGGTG), 199-206 (CERCGGTG), and 213-220 (CHECGGSG).

The protein belongs to the DnaJ family. In terms of assembly, homodimer. Zn(2+) is required as a cofactor.

The protein localises to the cytoplasm. Participates actively in the response to hyperosmotic and heat shock by preventing the aggregation of stress-denatured proteins and by disaggregating proteins, also in an autonomous, DnaK-independent fashion. Unfolded proteins bind initially to DnaJ; upon interaction with the DnaJ-bound protein, DnaK hydrolyzes its bound ATP, resulting in the formation of a stable complex. GrpE releases ADP from DnaK; ATP binding to DnaK triggers the release of the substrate protein, thus completing the reaction cycle. Several rounds of ATP-dependent interactions between DnaJ, DnaK and GrpE are required for fully efficient folding. Also involved, together with DnaK and GrpE, in the DNA replication of plasmids through activation of initiation proteins. This chain is Chaperone protein DnaJ, found in Thermotoga sp. (strain RQ2).